A 159-amino-acid chain; its full sequence is Protein B1 (159 aa).

A compositionally biased stretch (basic residues) spans 1–15; it reads MQKNMKTKKTKKRGR. 2 disordered regions span residues 1-100 and 133-159; these read MQKN…RTRE and PGHG…DPPR. Over residues 16-31 the composition is skewed to basic and acidic residues; sequence KEGNTPETERRMEPAR. Residues 85–96 show a composition bias toward basic residues; the sequence is RGRHIHTRGART.

The polypeptide is Protein B1 (B1) (Human herpesvirus 6B (strain Z29) (HHV-6 variant B)).